A 696-amino-acid polypeptide reads, in one-letter code: F-box/LRR-repeat protein 5 (696 aa).

The interval Met1 to Ser159 is hemerythrin-like. His15, His57, Glu58, Glu61, His80, His126, and Glu130 together coordinate Fe(3+). In terms of domain architecture, F-box spans Ser205–Leu251. LRR repeat units follow at residues Ser343–Thr367, Gln368–Gly395, Cys396–Glu421, Cys582–Gly612, Cys613–Gly640, and Cys641–Tyr666. Cys667, Cys681, Cys691, and Cys692 together coordinate [2Fe-2S] cluster.

In terms of assembly, part of a SCF (SKP1-cullin-F-box) protein ligase complex. [2Fe-2S] cluster serves as cofactor. In terms of processing, ubiquitinated upon iron and oxygen depletion, leading to its degradation by the proteasome. Ubiquitination is regulated by the hemerythrin-like region that acts as an oxygen and iron sensor.

Its subcellular location is the cytoplasm. It is found in the perinuclear region. It localises to the nucleus. It functions in the pathway protein modification; protein ubiquitination. In terms of biological role, component of some SCF (SKP1-cullin-F-box) protein ligase complex that plays a central role in iron homeostasis by promoting the ubiquitination and subsequent degradation of ireb2/irp2. Upon high iron and oxygen level, it specifically recognizes and binds ireb2/irp2, promoting its ubiquitination and degradation by the proteasome. This chain is F-box/LRR-repeat protein 5 (fbxl5), found in Salmo salar (Atlantic salmon).